The primary structure comprises 2294 residues: MKGHQFKSWIFELREIVREIKNAHYFLDSWTQFNSVGSFIHIFFHQERFRKLLDPRIFSILLLRNSQGSTSNRYFTIKGVVLFVVAALLYRINNRNMVESKNLYLKGLLPIPMNSIGPRNDTSEESFGSCNINRLIVSLLYLTKGKKISESCFRDPKESTWVLPITQKCIMPESNWSSRWWRNWIGKKRGFCCKISNETVAGIDISFKEKDIKYLEFLFVYYMDDPIRKGHDWELFDRLSPSKRRNIINLNSGQLFEILVKDWICYLMFAFREKIPIEVEGFCKQQGAGSTIQSNDIEHVSHLFSRNKWAISLQNCAQFHMWQFHQDLFVSWGKNPHESDFFRKISRENWIWLDNVWLVNKDRFFSKVRNVSSNIQYDSTRSSFVQVTDSSQLNGSSDQFIDPFDSISNEDSEYHYHTLINQREIQQLKERSILLDPSFIQTEGREIESDRFPKYLSGYSSMPRLFTEREKRMNNHLLPEESEEFLGNPTRAIRSFFSDRWSELHLGSNPTERSTRDQKLLKKEQDVSFVPSRRSENKEIVNIFKIITYLQNTVSIHPISSDLGCDMVPKDELDMDSSNKISFLNKNPFFDLFHLFHERKRGGYTLRHESEERFQEMADLFTLSITEPDLVYHKGFAFSIDSYGLDQRQFLKEVFNFRDESKKKSLLVLPPIFYEENESFYRRLRKIWVRISCGNYLEDQKRVVFASNNIMEAVNQYRLIRNMIQIQFQYSPYGYIRNVLNRFFLMKRPDRNFEYGIQRDLIGNDTLNHRTIMKDTINQHLSNLKKSQKKWFDPLIFLSQTERSINRDPNAYRYKWSNGSKNFQEHLEHFVSERKSRFQVVFDQLCINQYSIDWSEVIDKKDLSKSLRFFLSKLLRFFLSKLLLFLSKLLLFLSNSLPFFFVSFENIPIHRSEIHIYELKGPNDQLCNQLLESIGLQIVHLKKLKPFLLDDHNTSQKSKFLINGGTISPFLFNKIPKWMIDSFHTRKNRRKSFDNTDSAYFSIVSHDQDNWLNPVKPFQRSSLISSFSKANRLRFLNNPHHFCFYCNKRFPFYVEKARLNNSDFTFTYGQFLTILFIHNKTFSSCGGKKKHAFLERDTISPSSIESQVSNIFISNDFPQSGDERYNLYKSFHFPIRSDPLVRRAIYSIADISGTPLIEGQRVNFERTYCQTLSDMNLSDSEEKSLHQYLNFNSNMGLIHTPCSEKYLQRKKRSLCLKKCVDKGQMDRTFQRDSAFSTLSKWNLFQTYMPWFFTSTGYKYLNLIFLDTFSDLLRILSSSQKFVSIFHDIMHGLDISWRILQKKLCLPQRNLISEISSKSLHNLLLSEEMIHRNNESSLISTHLRSPNVREVLYSILFLLLVAGYIVRTHLLFVSRAYSELQTEFEKIKSLMIPSYMIELRKLLDRYPTSELNSFWLKNLFLVALEQLGDCLEEIRGSGGNMLWGGDPAYGVKSIRSKKKDLKINFIDIIDLISIIPNPINRITFSRNTRHLSHTSKEIYSLIRKRKNVSGDWIDDKIESWVANSDSIDDKEREFLVQFSTLRAEKRIDQILLSLTHSDHLSKNDSGYQMIEQPGTIYLRYLVDIHKKYLMNYEFNTSCLAERRIFLAHYQTITYSQTSCGANSFHFPSHGKPFSLRLALSPSRSILVIGSIGTGRSYLVKYLATNSYVPFITVFLNKFLDNKPKGFFIDDIDIDDSDDIDASNDIDRELDTELELLTMMNALTMDMMLEIDRFYITLQFELAKAMSPCIIWIPNIHDLDVNESSYLALGLLVNSLSRDCERCSTRNILVIASTHIPQKVDPALIAPNKLNTCIKIRRLLIPQQRKHFFTLSYTRGFHLEKKMFHTNGFESITMGSSARDLVALTNEALSISITQKKSIIDTNTIRSALHRQTWDLRSQVRSVQDHGILFYQIGRAVAQNVLISNCPIDPISIYMKKKSCNEGDSYLYKWYFELGTSMKKFTILLYLLSCSAGSVAQDLWSLPVPDEKNRITSYGFVENDSDLVHGLLEVQGALVGSSRTEKDCSQFDNDRVTLLFRSEPRDPLYMMQDGSCSIVDQRFLYEKYESEFEEGEGEGVLDPQQIEEDLFNHIVWAPRIWRPRGFLFDCIERPNELGFPYSAGSFRGKRIIYDEKYELQENDSEFLQSGTMQYQRRDRSSKEQGFFRISQFIWDPADPLFFLFKDQPFVSVFSHREFFADEEMSKGLLTSQTDPPTSIYKRWFIKNTQEKHFELLIQRQRWLRTNSSLSNGFFRSNTRSESYQYLSNLFISNGTLLDRMTKTLLKKRWLFSDEMKIGFM.

1648–1655 provides a ligand contact to ATP; it reads GSIGTGRS.

Belongs to the Ycf2 family.

The protein localises to the plastid. It is found in the chloroplast stroma. Probable ATPase of unknown function. Its presence in a non-photosynthetic plant (Epifagus virginiana) and experiments in tobacco indicate that it has an essential function which is probably not related to photosynthesis. This is Protein Ycf2 from Arabidopsis thaliana (Mouse-ear cress).